The sequence spans 484 residues: Magnesium transporter MRS2-3 (484 aa).

2 disordered regions span residues 1 to 40 and 141 to 186; these read MRGARPDEFNFSTNPSTPNTGQPTPTYPAGVGGGGGGRKK and TKPQ…QSLE. Positions 10–24 are enriched in polar residues; that stretch reads NFSTNPSTPNTGQPT. The stretch at 203–275 forms a coiled coil; that stretch reads ACLEAASSSL…LLDDDEDMAE (73 aa). The disordered stretch occupies residues 286–320; that stretch reads LEDSSNSSMNESDTFEVDLPQGDEDDRLPPEFASE. The segment covering 298–311 has biased composition (acidic residues); sequence DTFEVDLPQGDEDD. Residues 416–436 traverse the membrane as a helical segment; it reads GVMLTTATLVMSAFIAVAGVF. The Required for magnesium transport activity motif lies at 437–439; sequence GMN. A helical membrane pass occupies residues 455 to 475; the sequence is FIWTVIGGSIGSICLYVGAIG.

The protein belongs to the CorA metal ion transporter (MIT) (TC 1.A.35.5) family. As to expression, expressed in the whole plant.

It localises to the membrane. Functionally, magnesium transporter that may mediate the influx of magnesium. This Arabidopsis thaliana (Mouse-ear cress) protein is Magnesium transporter MRS2-3 (MRS2-3).